The chain runs to 444 residues: MLMHDVRPLPLDPNLLAILQAGSPTLWLNPHQGEPLPDFAPTAADLAEAGARLHRCAGLLAELFPELRPLGGRIASPLQPAEPLKRADHAQAGAWFVKRDDALPVAGSIKARGGFHEVLALAESIAERHGLVSAGADRRALASGEAHALFARHTVMVGSTGNLGLSIGMLASALGFRTVVHMSADAKAWKRARLRTRGVDVVEHAGDYAKAVDAGRRQAAGMPRCHFVDDEGSRMLFLGYATAAAELAAQLAQAGRPVDARHPLFVHLPCGVGGAPGGIAYGLKARYGEHVHVFVAEPTASPCVLVQLASGGAHPVSVYDVGLDNRTEADGLAVAQASHLAGPLLRAQAAGVFTVDDRQLFAHLLDARERLGIDLEPSAAAAFGGPAWLAGSEAGRAYLRGRGIVPEAATHVIWATGGSLVPAEEHRRFQARACAQRRESGAGA.

Lysine 110 is modified (N6-(pyridoxal phosphate)lysine).

This sequence belongs to the serine/threonine dehydratase family. DsdA subfamily. Pyridoxal 5'-phosphate serves as cofactor.

The enzyme catalyses D-serine = pyruvate + NH4(+). The sequence is that of Probable D-serine dehydratase from Burkholderia thailandensis (strain ATCC 700388 / DSM 13276 / CCUG 48851 / CIP 106301 / E264).